Reading from the N-terminus, the 365-residue chain is Eukaryotic translation initiation factor 3 subunit H (365 aa).

In terms of domain architecture, MPN spans Val11–Phe160.

Belongs to the eIF-3 subunit H family. In terms of assembly, component of the eukaryotic translation initiation factor 3 (eIF-3) complex.

It localises to the cytoplasm. Its function is as follows. Component of the eukaryotic translation initiation factor 3 (eIF-3) complex, which is involved in protein synthesis of a specialized repertoire of mRNAs and, together with other initiation factors, stimulates binding of mRNA and methionyl-tRNAi to the 40S ribosome. The eIF-3 complex specifically targets and initiates translation of a subset of mRNAs involved in cell proliferation. This Aspergillus terreus (strain NIH 2624 / FGSC A1156) protein is Eukaryotic translation initiation factor 3 subunit H.